We begin with the raw amino-acid sequence, 267 residues long: L-aspartate dehydrogenase (267 aa).

NAD(+)-binding residues include alanine 124 and asparagine 190. Histidine 220 is a catalytic residue.

The protein belongs to the L-aspartate dehydrogenase family.

The enzyme catalyses L-aspartate + NADP(+) + H2O = oxaloacetate + NH4(+) + NADPH + H(+). It carries out the reaction L-aspartate + NAD(+) + H2O = oxaloacetate + NH4(+) + NADH + H(+). It participates in cofactor biosynthesis; NAD(+) biosynthesis; iminoaspartate from L-aspartate (dehydrogenase route): step 1/1. Functionally, specifically catalyzes the NAD or NADP-dependent dehydrogenation of L-aspartate to iminoaspartate. This chain is L-aspartate dehydrogenase, found in Ralstonia pickettii (strain 12J).